We begin with the raw amino-acid sequence, 151 residues long: Superoxide dismutase [Cu-Zn] A (151 aa).

C6 is lipidated: S-palmitoyl cysteine. The Cu cation site is built by H45, H47, and H62. C56 and C144 are joined by a disulfide. Zn(2+) contacts are provided by H62, H70, H79, and D82. Residue H118 coordinates Cu cation.

The protein belongs to the Cu-Zn superoxide dismutase family. As to quaternary structure, homodimer, and heterodimer of Superoxide dismutase [Cu-Zn] A and B. Cu cation is required as a cofactor. The cofactor is Zn(2+).

It localises to the cytoplasm. Its subcellular location is the nucleus. The enzyme catalyses 2 superoxide + 2 H(+) = H2O2 + O2. Functionally, destroys radicals which are normally produced within the cells and which are toxic to biological systems. The chain is Superoxide dismutase [Cu-Zn] A (sod1-a) from Xenopus laevis (African clawed frog).